A 322-amino-acid polypeptide reads, in one-letter code: Allergen Asp f 4 (322 aa).

The signal sequence occupies residues 1-20 (MQLKNSMLLLTALAAGSSVA). A compositionally biased stretch (low complexity) spans 80–105 (AAAAAASTPEPSSSHSDSSSSSGVSA). Residues 80 to 109 (AAAAAASTPEPSSSHSDSSSSSGVSADWTN) are disordered.

It is found in the secreted. This chain is Allergen Asp f 4, found in Aspergillus fumigatus (strain ATCC MYA-4609 / CBS 101355 / FGSC A1100 / Af293) (Neosartorya fumigata).